A 445-amino-acid polypeptide reads, in one-letter code: Glutamyl-tRNA(Gln) amidotransferase subunit D (445 aa).

The Asparaginase/glutaminase domain occupies 93–425 (SEIKIISTGG…EKIRSLMISN (333 aa)). Catalysis depends on residues T103, T179, D180, and K258.

It belongs to the asparaginase 1 family. GatD subfamily. As to quaternary structure, heterodimer of GatD and GatE.

It catalyses the reaction L-glutamyl-tRNA(Gln) + L-glutamine + ATP + H2O = L-glutaminyl-tRNA(Gln) + L-glutamate + ADP + phosphate + H(+). Functionally, allows the formation of correctly charged Gln-tRNA(Gln) through the transamidation of misacylated Glu-tRNA(Gln) in organisms which lack glutaminyl-tRNA synthetase. The reaction takes place in the presence of glutamine and ATP through an activated gamma-phospho-Glu-tRNA(Gln). The GatDE system is specific for glutamate and does not act on aspartate. The sequence is that of Glutamyl-tRNA(Gln) amidotransferase subunit D from Saccharolobus islandicus (strain M.16.27) (Sulfolobus islandicus).